The primary structure comprises 802 residues: Epithelial sodium channel subunit delta (802 aa).

Residues 1-250 (MRAVLSQKTT…CSRGNRLKTT (250 aa)) are Cytoplasmic-facing. The disordered stretch occupies residues 145 to 211 (KQPHGGALTS…PPPPKEGHQE (67 aa)). Basic residues predominate over residues 166–176 (CHLKGWQHRPT). Residues 192-205 (PPRPGPPSAPPPPP) are compositionally biased toward pro residues. The chain crosses the membrane as a helical span at residues 251–271 (SWGLLSLGALVALCWQLGLLF). The Extracellular portion of the chain corresponds to 272–694 (ERHWHRPVLM…VPQLLSAMGS (423 aa)). N-linked (GlcNAc...) asparagine glycosylation is found at Asn330 and Asn548. A helical membrane pass occupies residues 695–715 (LCSLWFGASVLSLLELLELLL). Topologically, residues 716–802 (DASALTLVLG…GPQPLETLDT (87 aa)) are cytoplasmic. Residues 738-777 (RASPASGASSIKPEASQMPPPAGGTSDDPEPSGPHLPRVM) are disordered.

It belongs to the amiloride-sensitive sodium channel (TC 1.A.6) family. SCNN1D subfamily. As to quaternary structure, can form an alternative heterotrimeric epithelial sodium channel (ENaC), composed of a delta (SCNN1D), beta (SCNN1B), and gamma (SCNN1G) subunit, where the delta (SCNN1D) subunit replaces the alpha (SCNN1A) subunit. Not specifically expressed in epithelial cells.

It localises to the apical cell membrane. The enzyme catalyses Na(+)(in) = Na(+)(out). With respect to regulation, originally identified and characterized by its inhibition by the diuretic drug amiloride. Functionally, potential alternative pore-forming subunit of the epithelial sodium channel (ENaC), capable of replacing the alpha/SCNN1A subunit, creating a more active channel with distinct properties. ENaC functions in epithelial tissues, where it facilitates the electrodiffusion of sodium ions from the extracellular fluid through the apical membrane of cells, with water following osmotically, regulating sodium balance and fluid homeostasis. This subunit could also function independently as a sodium channel or assemble into other tissue-specific heterotrimeric sodium channels. In terms of biological role, ENaC channels including this isoform exhibit greater conductance. The protein is Epithelial sodium channel subunit delta of Homo sapiens (Human).